The chain runs to 331 residues: Ketol-acid reductoisomerase (NADP(+)) (331 aa).

A KARI N-terminal Rossmann domain is found at 2–182 (AQLFYDSDAD…GGTRAGILET (181 aa)). Residues 25 to 28 (YGSQ), serine 51, serine 53, and 83 to 86 (DEFQ) each bind NADP(+). Residue histidine 108 is part of the active site. Glycine 134 lines the NADP(+) pocket. Residues 183-328 (NFKEETETDL…KGLRSMFSWL (146 aa)) enclose the KARI C-terminal knotted domain. Positions 191, 195, 227, and 231 each coordinate Mg(2+). Serine 252 serves as a coordination point for substrate.

The protein belongs to the ketol-acid reductoisomerase family. Mg(2+) serves as cofactor.

The catalysed reaction is (2R)-2,3-dihydroxy-3-methylbutanoate + NADP(+) = (2S)-2-acetolactate + NADPH + H(+). It carries out the reaction (2R,3R)-2,3-dihydroxy-3-methylpentanoate + NADP(+) = (S)-2-ethyl-2-hydroxy-3-oxobutanoate + NADPH + H(+). The protein operates within amino-acid biosynthesis; L-isoleucine biosynthesis; L-isoleucine from 2-oxobutanoate: step 2/4. It functions in the pathway amino-acid biosynthesis; L-valine biosynthesis; L-valine from pyruvate: step 2/4. In terms of biological role, involved in the biosynthesis of branched-chain amino acids (BCAA). Catalyzes an alkyl-migration followed by a ketol-acid reduction of (S)-2-acetolactate (S2AL) to yield (R)-2,3-dihydroxy-isovalerate. In the isomerase reaction, S2AL is rearranged via a Mg-dependent methyl migration to produce 3-hydroxy-3-methyl-2-ketobutyrate (HMKB). In the reductase reaction, this 2-ketoacid undergoes a metal-dependent reduction by NADPH to yield (R)-2,3-dihydroxy-isovalerate. This Synechococcus sp. (strain CC9311) protein is Ketol-acid reductoisomerase (NADP(+)).